A 455-amino-acid polypeptide reads, in one-letter code: Zinc finger protein ZPR1 homolog (455 aa).

C4-type zinc fingers lie at residues 28-60 (CPVCEEDGETRIMCTSIPYYRAVILMSFECPHC) and 247-279 (CPNCHGPTEVKMKPTDIPFFQTVIIMSLACDRC).

It belongs to the ZPR1 family.

It is found in the nucleus. The polypeptide is Zinc finger protein ZPR1 homolog (Caenorhabditis elegans).